Here is a 184-residue protein sequence, read N- to C-terminus: Cysteine proteinase inhibitor 3 (184 aa).

Positions 1 to 35 (MLRRRGFCCCSGAPAAAAAALLLLAVAAAAPRAAG) are cleaved as a signal peptide. Positions 48-134 (GMLAAIRREQ…KAVVEFRHVG (87 aa)) constitute a Cystatin domain. The Secondary area of contact signature appears at 90–94 (QVVTG). Positions 138–165 (SQSATAADDNAGQDTADPTVASRNDLHN) are disordered.

It belongs to the cystatin family. Phytocystatin subfamily.

It localises to the secreted. Functionally, specific inhibitor of cysteine proteinases. Probably involved in the regulation of endogenous processes and in defense against pests and pathogens. The protein is Cysteine proteinase inhibitor 3 of Oryza sativa subsp. japonica (Rice).